The following is a 3326-amino-acid chain: Deoxyribonuclease CdiA (3326 aa).

The two-partner system transport domain (TPS) stretch occupies residues 36-342 (TADGVLTSGG…ARGALTLTGS (307 aa)). The FHA-1 stretch occupies residues 343–1396 (YAGAGSLYSD…ITVRTGTLTN (1054 aa)). Residues 1397–1765 (QREGLVVTES…QQLGSPSLTD (369 aa)) are receptor binding domain (RBD). Positions 1766-1951 (YPLPTSQSGL…LAQADKTNLQ (186 aa)) are YP domain. The interval 1959-2097 (SVSLSAGGDI…AGGPLQLAAG (139 aa)) is periplasmic FHA-1 repeat (pFR). An FHA-2 region spans residues 2125 to 2660 (QGLVQSTVAS…SNRYDSKQTS (536 aa)). The VENN CT cleavage motif motif lies at 3060–3063 (VENN). A CT domain region spans residues 3060-3326 (VENNSLGDIA…DRNRQIGVIK (267 aa)).

In the N-terminal section; belongs to the CdiA toxin family. The C-terminal (CT) domain interacts with cognate CdiI but not non-cognate CdiI from E.coli strain 536 / UPEC.

It is found in the target cell. The protein localises to the target cell cytoplasm. Toxic component of a toxin-immunity protein module, which functions as a cellular contact-dependent growth inhibition (CDI) system. CDI modules allow bacteria to communicate with and inhibit the growth of closely related neighboring bacteria in a contact-dependent fashion. CDI is neutralized by its cognate immunity protein CdiI, but not by non-cognate CdiI from other bacteria. The C-terminal domain (CT) has strong DNase activity; this activity is inhibited by cognate CdiI. In terms of biological role, the CdiA protein is thought to be exported from the cell through the central lumen of CdiB, the other half of its two-partner system (TPS). The TPS domain probably remains associated with CdiB while the FHA-1 domain forms an extended filament with the receptor-binding domain (RBD) at its extremity; in the secretion arrested state the C-terminus of the RBD and YP domains form a hairpin-like structure as the FHA-2, PT and CT domains are periplasmic. The YP domain is probably responsible for this arrest at the point where it re-enters the host cell periplasm. Upon binding to a target cell outer membrane receptor a signal is transmitted to activate secretion. The filament elongates slightly, the rest of CdiA is secreted and the FHA-2 domain becomes stably associated with the target cell's outer membrane where it facilitates entry of the toxic CT domain into the target cell periplasm. From there the toxic CT domain is cleaved and gains access to the target cell cytoplasm via an inner membrane protein. The sequence is that of Deoxyribonuclease CdiA from Dickeya dadantii (strain 3937) (Erwinia chrysanthemi (strain 3937)).